The primary structure comprises 340 residues: Undecaprenyl-phosphate 4-deoxy-4-formamido-L-arabinose transferase (340 aa).

The next 2 helical transmembrane spans lie at 235–255 and 269–289; these read LSIVGFAMAGLGVLFAAALIF and LFVLFAVLFVFTGGQFIGMGL.

Belongs to the glycosyltransferase 2 family.

Its subcellular location is the cell inner membrane. It catalyses the reaction UDP-4-deoxy-4-formamido-beta-L-arabinose + di-trans,octa-cis-undecaprenyl phosphate = 4-deoxy-4-formamido-alpha-L-arabinopyranosyl di-trans,octa-cis-undecaprenyl phosphate + UDP. It participates in glycolipid biosynthesis; 4-amino-4-deoxy-alpha-L-arabinose undecaprenyl phosphate biosynthesis; 4-amino-4-deoxy-alpha-L-arabinose undecaprenyl phosphate from UDP-4-deoxy-4-formamido-beta-L-arabinose and undecaprenyl phosphate: step 1/2. It functions in the pathway bacterial outer membrane biogenesis; lipopolysaccharide biosynthesis. In terms of biological role, catalyzes the transfer of 4-deoxy-4-formamido-L-arabinose from UDP to undecaprenyl phosphate. The modified arabinose is attached to lipid A and is required for resistance to polymyxin and cationic antimicrobial peptides. In Pseudomonas fluorescens (strain Pf0-1), this protein is Undecaprenyl-phosphate 4-deoxy-4-formamido-L-arabinose transferase.